A 282-amino-acid chain; its full sequence is Light-independent protochlorophyllide reductase iron-sulfur ATP-binding protein (282 aa).

Residues 10–15 and Lys-39 contribute to the ATP site; that span reads GIGKST. Mg(2+) is bound at residue Ser-14. [4Fe-4S] cluster is bound by residues Cys-95 and Cys-129. 180-181 contacts ATP; sequence NR.

It belongs to the NifH/BchL/ChlL family. Homodimer. Protochlorophyllide reductase is composed of three subunits; ChlL, ChlN and ChlB. The cofactor is [4Fe-4S] cluster.

Its subcellular location is the plastid. The protein localises to the cyanelle. The enzyme catalyses chlorophyllide a + oxidized 2[4Fe-4S]-[ferredoxin] + 2 ADP + 2 phosphate = protochlorophyllide a + reduced 2[4Fe-4S]-[ferredoxin] + 2 ATP + 2 H2O. The protein operates within porphyrin-containing compound metabolism; chlorophyll biosynthesis (light-independent). Its function is as follows. Component of the dark-operative protochlorophyllide reductase (DPOR) that uses Mg-ATP and reduced ferredoxin to reduce ring D of protochlorophyllide (Pchlide) to form chlorophyllide a (Chlide). This reaction is light-independent. The L component serves as a unique electron donor to the NB-component of the complex, and binds Mg-ATP. This is Light-independent protochlorophyllide reductase iron-sulfur ATP-binding protein from Cyanophora paradoxa.